The following is a 490-amino-acid chain: MRSNPTXSGSEVSAVEKKNLGRIVQIIGPVLDVAFPPGKMPYIYNALVVQGRDNEQMNVTCEVQQILGNNRVRAVAMSDTDGLMRGMEVIDTGVSISVPVGGATLGRIFNVLGEPVDKLGPVDTKTTSPIHRSAPAFIQLDTKLSIFETGIKVVDLLAPYRRGGKIGLFGGAGVGKTVLIMELINNIAKAHGGVSVFGGVGERTREGNDLYMEMKESGVINEENIAESKVALVYGQMNEPPGARMRVGLTALTMAEYFRDVNEQDVLLFIDNIFRFVQAGSEVSALLGRMPSAVGYQPTLSTEMGTLQERITSTKEGSITSIQAVYVPADDLTDPAPATTFAHLDATTVLSRGLAAKGIYPAVDPLDSTSTMLQPRIVGEEHYETAQRVKETLQRYKELQDIIAILGLDELSEEDRLTVARARKIERFLSQPFFVAEVFTGSPGKYVGLAETIRGFQLILSGELDGLPEQAFYLVGNIDEATAKAMNLKT.

Residue 170–177 coordinates ATP; sequence GGAGVGKT.

It belongs to the ATPase alpha/beta chains family. F-type ATPases have 2 components, CF(1) - the catalytic core - and CF(0) - the membrane proton channel. CF(1) has five subunits: alpha(3), beta(3), gamma(1), delta(1), epsilon(1). CF(0) has four main subunits: a(1), b(1), b'(1) and c(9-12).

It localises to the plastid. Its subcellular location is the chloroplast thylakoid membrane. It carries out the reaction ATP + H2O + 4 H(+)(in) = ADP + phosphate + 5 H(+)(out). Its function is as follows. Produces ATP from ADP in the presence of a proton gradient across the membrane. The catalytic sites are hosted primarily by the beta subunits. In Cressa truxillensis (Spreading alkaliweed), this protein is ATP synthase subunit beta, chloroplastic.